Consider the following 277-residue polypeptide: Phosphoenolpyruvate synthase regulatory protein (277 aa).

An ADP-binding site is contributed by 157 to 164 (GVSRCGKT).

Belongs to the pyruvate, phosphate/water dikinase regulatory protein family. PSRP subfamily.

It catalyses the reaction [pyruvate, water dikinase] + ADP = [pyruvate, water dikinase]-phosphate + AMP + H(+). The enzyme catalyses [pyruvate, water dikinase]-phosphate + phosphate + H(+) = [pyruvate, water dikinase] + diphosphate. In terms of biological role, bifunctional serine/threonine kinase and phosphorylase involved in the regulation of the phosphoenolpyruvate synthase (PEPS) by catalyzing its phosphorylation/dephosphorylation. The polypeptide is Phosphoenolpyruvate synthase regulatory protein (Salmonella agona (strain SL483)).